Consider the following 621-residue polypeptide: Probable bifunctional dTTP/UTP pyrophosphatase/methyltransferase protein (621 aa).

The segment at 11 to 223 (LHKRVVLASA…PPRPEDLRRS (213 aa)) is MAF-like. A Phosphoserine modification is found at Ser-21. Asp-88 functions as the Proton acceptor; for pyrophosphatase activity in the catalytic mechanism. Ser-228 carries the post-translational modification Phosphoserine. Thr-234 bears the Phosphothreonine mark. A disordered region spans residues 235–279 (FEDLSDVEGGGSEPTQRDAGSRDEKAEAGEAGQATAEAECHRTRE). Ser-239 bears the Phosphoserine mark. Residues 249-262 (TQRDAGSRDEKAEA) show a composition bias toward basic and acidic residues. The segment at 277 to 621 (TRETLPPFPT…DAILATKVAP (345 aa)) is ASMT-like. Ser-421 carries the phosphoserine modification. S-adenosyl-L-methionine contacts are provided by residues Asp-482, 508–510 (GDF), and Arg-525.

In the N-terminal section; belongs to the Maf family. YhdE subfamily. The protein in the C-terminal section; belongs to the class I-like SAM-binding methyltransferase superfamily. Cation-independent O-methyltransferase family. Homodimer. A divalent metal cation serves as cofactor. As to expression, widely expressed. In adult, highly expressed in pancreas, placenta, fibroblast, thymus, prostate, testis, ovary and colon. Expressed at lower levels in spleen, small intestine and leukocytes. In fetus, expressed at high levels in the lung and kidney and at lower level in brain and liver.

The catalysed reaction is dTTP + H2O = dTMP + diphosphate + H(+). The enzyme catalyses UTP + H2O = UMP + diphosphate + H(+). It carries out the reaction CTP + H2O = CMP + diphosphate + H(+). It catalyses the reaction psi-UTP + H2O = psi-UMP + diphosphate + H(+). The catalysed reaction is 5-methyl-UTP + H2O = 5-methyl-UMP + diphosphate + H(+). The enzyme catalyses 5-methyl-CTP + H2O = 5-methyl-CMP + diphosphate + H(+). In terms of biological role, nucleoside triphosphate pyrophosphatase that hydrolyzes dTTP and UTP. Can also hydrolyze CTP and the modified nucleotides pseudo-UTP, 5-methyl-UTP (m(5)UTP) and 5-methyl-CTP (m(5)CTP). Has weak activity with dCTP, 8-oxo-GTP and N(4)-methyl-dCTP. May have a dual role in cell division arrest and in preventing the incorporation of modified nucleotides into cellular nucleic acids. In addition, the presence of the putative catalytic domain of S-adenosyl-L-methionine binding in the C-terminal region argues for a methyltransferase activity. In Homo sapiens (Human), this protein is Probable bifunctional dTTP/UTP pyrophosphatase/methyltransferase protein (ASMTL).